A 473-amino-acid polypeptide reads, in one-letter code: Glycine receptor subunit beta-type 4 (473 aa).

An N-terminal signal peptide occupies residues 1–19 (MHSLFLKILIYSLMQCVLG). Over 20 to 249 (QAEFWDYDEN…EFHVDREITH (230 aa)) the chain is Extracellular. 3 N-linked (GlcNAc...) asparagine glycosylation sites follow: Asn-29, Asn-105, and Asn-151. Cys-166 and Cys-180 are joined by a disulfide. A helical transmembrane segment spans residues 250–271 (HIIQSYIPTSLIVIISWFSFWL). Residues 272–276 (DVEAV) lie on the Cytoplasmic side of the membrane. Residues 277-297 (PGRVSLSITTLLTLATQSSAA) form a helical membrane-spanning segment. At 298-308 (RMALPQASDVK) the chain is on the extracellular side. The chain crosses the membrane as a helical span at residues 309–329 (AIDVWMGTCMAFVFSAMIEFT). The Cytoplasmic segment spans residues 330–439 (VVNYCVRRKV…NRKNAQKIDR (110 aa)). A helical membrane pass occupies residues 440–460 (YSRALFPLAFIIFNIFYWIYY). Topologically, residues 461–473 (LKYAGSNSPELLL) are extracellular.

This sequence belongs to the ligand-gated ion channel (TC 1.A.9) family. Glycine receptor (TC 1.A.9.3) subfamily. Pentamer.

It localises to the postsynaptic cell membrane. The protein resides in the synapse. Its subcellular location is the cell membrane. Its function is as follows. Glycine receptors are ligand-gated chloride channels. Channel opening is triggered by extracellular glycine. Contributes to the generation of inhibitory postsynaptic currents. The polypeptide is Glycine receptor subunit beta-type 4 (Caenorhabditis elegans).